The following is a 312-amino-acid chain: Nicotinamide adenine dinucleotide transporter 1, chloroplastic (312 aa).

3 Solcar repeats span residues 11–103 (KNVL…LKSF), 111–199 (LSVG…IKVY), and 211–299 (LNAR…VHRF). 6 consecutive transmembrane segments (helical) span residues 17-37 (AAAG…LDVI), 78-98 (GLSP…TMYD), 117-137 (VLAA…LWVV), 171-191 (GLYS…IQFP), 216-232 (VAVA…TLTY), and 271-293 (FYRG…FTSF).

It belongs to the mitochondrial carrier (TC 2.A.29) family. Highly expressed in young leaf mesophyll cells, root tips and at the branches of adventitious roots. Low expression in all flower tissues and not detected in siliques and seeds.

The protein resides in the plastid. It localises to the chloroplast membrane. Inhibited by pyridoxal 5'-phosphate, bathophenanthroline, tannic acid, mersalyl, mercuric chloride, p-hydroxymercuribenzoate, p-hydroxymercuribenzoate sulfonate, bromocresol purple and N-ethylmaleimide. Its function is as follows. Mediates the NAD(+) import into chloroplast. Favors the NAD(+)(in)/ADP or AMP(out) antiport exchange, but is also able to catalyze a low unidirectional transport (uniport) of NAD(+). Transports NAD(+), nicotinic acid adenine dinucleotide, nicotinamide mononucleotide, nicotinic acid mononucleotide, FAD, FMN, TTP, TDP, TMP, UTP, UDP, UMP, CTP, CDP, CMP, GTP, GDP, GMP, 3'-AMP, ATP, ADP, and AMP, has low transport activity with cAMP, pyrophosphate, NADH and alpha-NAD(+), and has no activity with NADP(+), NADPH, nicotinamide, nicotinic acid, adenosine, thiamine mono- or diphosphate, inorganic phosphate, CoA, folate, NaCl, malate, malonate, citrate, fumarate, aspartate, glutamate, S-adenosylmethionine, lysine, arginine, and ornithine. This chain is Nicotinamide adenine dinucleotide transporter 1, chloroplastic (NDT1), found in Arabidopsis thaliana (Mouse-ear cress).